Reading from the N-terminus, the 122-residue chain is Mth938 domain-containing protein (122 aa).

Positions 6 to 122 (IASLSWGQMK…RVGGVFHSTC (117 aa)) are MTH138-like domain.

Belongs to the AAMDC family.

It is found in the cytoplasm. In terms of biological role, may play a role in preadipocyte differentiation and adipogenesis. The polypeptide is Mth938 domain-containing protein (AAMDC) (Bos taurus (Bovine)).